The primary structure comprises 347 residues: Involucrin (347 aa).

Disordered stretches follow at residues 1–43 and 56–347; these read MSQQ…LPAP and PLED…RRSL. The segment covering 27–36 has biased composition (polar residues); the sequence is ADTQQEQVKQ. Composition is skewed to low complexity over residues 70-114 and 138-161; these read VPEQ…QQES and DQQQ…QQES. Basic and acidic residues-rich tracts occupy residues 164–173 and 212–221; these read QELHVDHHQQ. Low complexity-rich tracts occupy residues 222 to 241 and 265 to 285; these read QQES…QQES and DQQQ…QQQE. Basic and acidic residues predominate over residues 287–341; it reads QEDHQKAEHLEQEEAQREQQLKGQLEQEKKGVYQHLDQELTKRDEHLEKKGEHCW.

Belongs to the involucrin family. As to quaternary structure, directly or indirectly cross-linked to cornifelin (CNFN). In terms of processing, substrate of transglutaminase. Specific glutamines or lysines are cross-linked to keratins, desmoplakin and to inter involucrin molecules. In terms of tissue distribution, keratinocytes of epidermis and other stratified squamous epithelia.

Its subcellular location is the cytoplasm. Functionally, part of the insoluble cornified cell envelope (CE) of stratified squamous epithelia. The protein is Involucrin (IVL) of Sus scrofa (Pig).